Here is a 715-residue protein sequence, read N- to C-terminus: MQEFDKSISFDGRDIRLKLGLLAPQAGGAVLIQSGDTAVLVTATTTKGREGIDFLPLTVDYEERLYAAGRIPGGFLRREGRPPERAILISRLIDRPLRPLFPNWWRNDIQIIATTLSMDEEVPPDVLAVTGSSIAVIQAQIPFYGPMAAVRVGLIGDDFIINPTYREVENGDLDLVVAGSPDGVVMVEAGANQLPEQDIIEAIDFGYEAVRDLIGAQYEIMEELGMEIAKAEPPSVDEALEKFISDRAADSIKKVLVQYDLGKAERDSALDNIKETAIEEAIAELPEDDPIKVTTSEDPKAVGNLYKGLTKKLMRSQIVDEGIRVDGRKLDEVRPISCRVGLLPPRVHGSALFTRGLTQVFSLATLGTPGDAQDLGDDLHPEDEKRYLHHYNFPPFSVGETKPLRSPGRREIGHGALAERAILPVLPPQDEFPYVVRVVSEVVSSNGSTSMGSVCGSTLALMDAGVPIIKPVSGAAMGLIREGKEVRILTDIQGIEDFLGDMDFKVAGTDTGITALQMDMKITGLSMDVVAKAIEQALPARLHILDKMLAVIDQPRPELSPFAPRLLTMKIDPEQIGLVIGPGGKTIKSITEQTGSKIDIADDGTVTIAAIQAKKAERARDLIFNMTRKLNEGEVYLGRVTRIIPIGAFVEVLPGKEGMIHISQLAERRVGKVEEEVAVGDEVVVKVREIDNKGRLNLTRLGIHPDEAAAVRKTF.

Mg(2+) contacts are provided by Asp497 and Asp503. Positions 564-623 constitute a KH domain; it reads PRLLTMKIDPEQIGLVIGPGGKTIKSITEQTGSKIDIADDGTVTIAAIQAKKAERARDLI. The S1 motif domain maps to 633–701; that stretch reads GEVYLGRVTR…NKGRLNLTRL (69 aa).

It belongs to the polyribonucleotide nucleotidyltransferase family. Mg(2+) serves as cofactor.

The protein resides in the cytoplasm. It carries out the reaction RNA(n+1) + phosphate = RNA(n) + a ribonucleoside 5'-diphosphate. Its function is as follows. Involved in mRNA degradation. Catalyzes the phosphorolysis of single-stranded polyribonucleotides processively in the 3'- to 5'-direction. The sequence is that of Polyribonucleotide nucleotidyltransferase from Crocosphaera subtropica (strain ATCC 51142 / BH68) (Cyanothece sp. (strain ATCC 51142)).